The following is a 175-amino-acid chain: Large ribosomal subunit protein uL18 (175 aa).

The protein belongs to the universal ribosomal protein uL18 family. Part of the 50S ribosomal subunit. Contacts the 5S and 23S rRNAs.

In terms of biological role, this is one of the proteins that bind and probably mediate the attachment of the 5S RNA into the large ribosomal subunit, where it forms part of the central protuberance. The sequence is that of Large ribosomal subunit protein uL18 from Methanosphaerula palustris (strain ATCC BAA-1556 / DSM 19958 / E1-9c).